The sequence spans 310 residues: Cytochrome f (310 aa).

The signal sequence occupies residues Met-1–Ala-27. 4 residues coordinate heme: Tyr-28, Cys-48, Cys-51, and His-52. A helical membrane pass occupies residues Ile-277–Lys-297.

This sequence belongs to the cytochrome f family. As to quaternary structure, the 4 large subunits of the cytochrome b6-f complex are cytochrome b6, subunit IV (17 kDa polypeptide, PetD), cytochrome f and the Rieske protein, while the 4 small subunits are PetG, PetL, PetM and PetN. The complex functions as a dimer. Requires heme as cofactor.

The protein localises to the cellular thylakoid membrane. Its function is as follows. Component of the cytochrome b6-f complex, which mediates electron transfer between photosystem II (PSII) and photosystem I (PSI), cyclic electron flow around PSI, and state transitions. This Synechococcus sp. (strain WH7803) protein is Cytochrome f.